The sequence spans 617 residues: Serine/threonine-protein phosphatase 2A activator 1 (617 aa).

The span at methionine 1 to alanine 11 shows a compositional bias: pro residues. Disordered stretches follow at residues methionine 1–glutamate 25, valine 84–serine 169, glycine 230–glutamine 261, serine 376–threonine 398, and arginine 572–lysine 617. Polar residues predominate over residues valine 84–glycine 93. The span at glutamine 94–glutamine 104 shows a compositional bias: low complexity. The segment covering glutamate 239–glycine 252 has biased composition (acidic residues).

Belongs to the PTPA-type PPIase family.

It is found in the cytoplasm. It localises to the nucleus. The enzyme catalyses [protein]-peptidylproline (omega=180) = [protein]-peptidylproline (omega=0). PPIases accelerate the folding of proteins. It catalyzes the cis-trans isomerization of proline imidic peptide bonds in oligopeptides. Acts as a regulatory subunit for PP2A-like phosphatases modulating their activity or substrate specificity, probably by inducing a conformational change in the catalytic subunit, a direct target of the PPIase. Can reactivate inactive phosphatase PP2A-phosphatase methylesterase complexes (PP2Ai) in presence of ATP and Mg(2+) by dissociating the inactive form from the complex. In Neurospora crassa (strain ATCC 24698 / 74-OR23-1A / CBS 708.71 / DSM 1257 / FGSC 987), this protein is Serine/threonine-protein phosphatase 2A activator 1 (rrd-1).